The sequence spans 626 residues: uncharacterized protein (626 aa).

The chain crosses the membrane as a helical span at residues 103–123; sequence AGALLVKFFPLLLLYPLTYLA. The 419-residue stretch at 200-618 folds into the Protein kinase domain; sequence FENREPVGSG…DILEAARPFL (419 aa). ATP-binding positions include 206–214 and K311; that span reads VGSGCVAQV. D445 (proton acceptor) is an active-site residue.

The protein belongs to the protein kinase superfamily. ADCK protein kinase family.

The protein resides in the mitochondrion. It localises to the membrane. The function of this protein is not yet clear. It is not known if it has protein kinase activity and what type of substrate it would phosphorylate (Ser, Thr or Tyr). Involved in the mitochondrial import of CoQ precursors, plays a role in muscle mitochondrial function and fatty acid beta-oxidation. This is an uncharacterized protein from Homo sapiens (Human).